The following is a 201-amino-acid chain: Peptidyl-tRNA hydrolase (201 aa).

Y15 contacts tRNA. H20 acts as the Proton acceptor in catalysis. Positions 66, 68, and 114 each coordinate tRNA.

The protein belongs to the PTH family. As to quaternary structure, monomer.

It localises to the cytoplasm. It carries out the reaction an N-acyl-L-alpha-aminoacyl-tRNA + H2O = an N-acyl-L-amino acid + a tRNA + H(+). In terms of biological role, hydrolyzes ribosome-free peptidyl-tRNAs (with 1 or more amino acids incorporated), which drop off the ribosome during protein synthesis, or as a result of ribosome stalling. Catalyzes the release of premature peptidyl moieties from peptidyl-tRNA molecules trapped in stalled 50S ribosomal subunits, and thus maintains levels of free tRNAs and 50S ribosomes. The chain is Peptidyl-tRNA hydrolase from Burkholderia thailandensis (strain ATCC 700388 / DSM 13276 / CCUG 48851 / CIP 106301 / E264).